Consider the following 283-residue polypeptide: 4-diphosphocytidyl-2-C-methyl-D-erythritol kinase (283 aa).

Lys-10 is an active-site residue. ATP is bound at residue 99-109 (PMGGGLGGGSS). The active site involves Asp-141.

It belongs to the GHMP kinase family. IspE subfamily. As to quaternary structure, homodimer.

It carries out the reaction 4-CDP-2-C-methyl-D-erythritol + ATP = 4-CDP-2-C-methyl-D-erythritol 2-phosphate + ADP + H(+). The protein operates within isoprenoid biosynthesis; isopentenyl diphosphate biosynthesis via DXP pathway; isopentenyl diphosphate from 1-deoxy-D-xylulose 5-phosphate: step 3/6. Catalyzes the phosphorylation of the position 2 hydroxy group of 4-diphosphocytidyl-2C-methyl-D-erythritol. In Salmonella arizonae (strain ATCC BAA-731 / CDC346-86 / RSK2980), this protein is 4-diphosphocytidyl-2-C-methyl-D-erythritol kinase.